The sequence spans 81 residues: MNVEHEISLLVEEIRRLGTKNADGQVSVKFGVLFADEKCANLFEALVGTLKAAKRRKIVTYQGELLLQGVHDNVDIVLLQD.

It belongs to the costars family.

In Coturnix coturnix (Common quail), this protein is Costars family protein ABRACL.